Consider the following 224-residue polypeptide: UPF0758 protein PBPRA0202 (224 aa).

Residues 102–224 (VLTSPQHTRH…IVSFSEQGWL (123 aa)) form the MPN domain. Positions 173, 175, and 186 each coordinate Zn(2+). A JAMM motif motif is present at residues 173-186 (HNHPSGVAEPSQSD).

This sequence belongs to the UPF0758 family.

This is UPF0758 protein PBPRA0202 from Photobacterium profundum (strain SS9).